Consider the following 84-residue polypeptide: Dolichol phosphate-mannose biosynthesis regulatory protein (84 aa).

Transmembrane regions (helical) follow at residues 11 to 31 and 49 to 69; these read LGLVAVSLIIFTYYTAWVILL and YAVAIPLAAGLLLLLFVGLFI.

This sequence belongs to the DPM2 family. As to quaternary structure, component of the dolichol-phosphate mannose (DPM) synthase complex composed of DPM1, DPM2 and DPM3; in the complex interacts directly with DPM3. Component of the glycosylphosphatidylinositol-N-acetylglucosaminyltransferase (GPI-GnT) complex composed at least by PIGA, PIGC, PIGH, PIGP, PIGQ, PIGY and DPM2. Interacts with PIGA, PIGC and PIGQ.

The protein resides in the endoplasmic reticulum membrane. It participates in protein modification; protein glycosylation. Functionally, regulates the biosynthesis of dolichol phosphate-mannose. Regulatory subunit of the dolichol-phosphate mannose (DPM) synthase complex; essential for the ER localization and stable expression of DPM1. Part of the glycosylphosphatidylinositol-N-acetylglucosaminyltransferase (GPI-GnT) complex that catalyzes the transfer of N-acetylglucosamine from UDP-N-acetylglucosamine to phosphatidylinositol and participates in the first step of GPI biosynthesis. May act by regulating the GPI-GNT complex. In Homo sapiens (Human), this protein is Dolichol phosphate-mannose biosynthesis regulatory protein.